We begin with the raw amino-acid sequence, 295 residues long: Light-independent protochlorophyllide reductase iron-sulfur ATP-binding protein (295 aa).

Residues Gly39–Thr44 and Lys68 contribute to the ATP site. Mg(2+) is bound at residue Ser43. [4Fe-4S] cluster contacts are provided by Cys124 and Cys158. Asn209–Arg210 is an ATP binding site.

This sequence belongs to the NifH/BchL/ChlL family. Homodimer. Protochlorophyllide reductase is composed of three subunits; ChlL, ChlN and ChlB. [4Fe-4S] cluster is required as a cofactor.

The enzyme catalyses chlorophyllide a + oxidized 2[4Fe-4S]-[ferredoxin] + 2 ADP + 2 phosphate = protochlorophyllide a + reduced 2[4Fe-4S]-[ferredoxin] + 2 ATP + 2 H2O. It functions in the pathway porphyrin-containing compound metabolism; chlorophyll biosynthesis (light-independent). Component of the dark-operative protochlorophyllide reductase (DPOR) that uses Mg-ATP and reduced ferredoxin to reduce ring D of protochlorophyllide (Pchlide) to form chlorophyllide a (Chlide). This reaction is light-independent. The L component serves as a unique electron donor to the NB-component of the complex, and binds Mg-ATP. This chain is Light-independent protochlorophyllide reductase iron-sulfur ATP-binding protein, found in Prochlorococcus marinus (strain MIT 9301).